We begin with the raw amino-acid sequence, 201 residues long: Inner membrane protein YnbA (201 aa).

Residues 1-43 (MTLYQIKPLFQSLLRPTMFWLYKHHVTANHITLAALALSLLTG) are Periplasmic-facing. The helical transmembrane segment at 44-64 (LLLMLAAQPILFLLLPIVLFI) threads the bilayer. Over 65–84 (RMALNALDGMLARECNQQTR) the chain is Cytoplasmic. Residues 85–107 (LGAILNETGDVISDIALYLPFLF) traverse the membrane as a helical segment. Topologically, residues 108–116 (LPESNASLV) are periplasmic. A helical membrane pass occupies residues 117–139 (ILMLFCTILTEFCGLLAQTINGV). Residues 140–151 (RSYAGPFGKSDR) lie on the Cytoplasmic side of the membrane. Residues 152-172 (ALIFGLWGLAVAIYPQWMQWN) traverse the membrane as a helical segment. The Periplasmic segment spans residues 173-175 (NLL). A helical membrane pass occupies residues 176-196 (WSIASILLLWTAINRCRSVLL). Over 197-201 (MSAEI) the chain is Cytoplasmic.

It localises to the cell inner membrane. The sequence is that of Inner membrane protein YnbA (ynbA) from Escherichia coli (strain K12).